The chain runs to 633 residues: Guanylate-binding protein 6 (633 aa).

Residues 1 to 310 are GTPase domain (Globular); it reads MESGPKMLAP…EAINSGAVPC (310 aa). One can recognise a GB1/RHD3-type G domain in the interval 35–277; it reads SQPVVVVAIV…FCSYIFTHAR (243 aa). Residues 45 to 52, 67 to 69, and 97 to 101 contribute to the GTP site; these read GLYRTGKS, LGS, and DTEGL.

Belongs to the TRAFAC class dynamin-like GTPase superfamily. GB1/RHD3 GTPase family. GB1 subfamily. Post-translationally, (Microbial infection) Ubiquitinated by S.flexneri IpaH9.8, leading to its degradation by the proteasome, thereby preventing its ability to promote host defense against bacterial infection.

It localises to the cytoplasmic vesicle. It catalyses the reaction GTP + H2O = GDP + phosphate + H(+). Functionally, interferon (IFN)-inducible GTPase that plays important roles in innate immunity against a diverse range of bacterial, viral and protozoan pathogens, such as bacterial pathogens Listeria monocytogenes and Mycobacterium bovis BCG as well as the protozoan pathogen Toxoplasma gondii. Confers protection to several pathogens, including the bacterial pathogens Listeria monocytogenes and Mycobacterium bovis BCG as well as the protozoan pathogen Toxoplasma gondii. In Homo sapiens (Human), this protein is Guanylate-binding protein 6 (GBP6).